Reading from the N-terminus, the 412-residue chain is MANVADTKLYDILGVPPGASENELKKAYRKLAKEYHPDKNPNAGDKFKEISFAYEVLSNPEKRELYDRYGEQGLREGSGGGGGMDDIFSHIFGGGLFSFMGNQSRSRNGRRRGEDMMHPLKVSLEDLYNGKTTKLQLSKNVLCSACSGQGGKSGAVQKCSACRGRGVRIMIRQLAPGMVQQMQSVCSDCNGEGEVINEKDRCKKCEGKKVIKEVKILEVHVDKGMKHGQRITFTGEADQAPGVEPGDIVLLLQEKEHEVFQRDGNDLHMTYKIGLVEALCGFQFTFKHLDGRQIVVKYPPGKVIEPGCVRVVRGEGMPQYRNPFEKGDLYIKFDVQFPENNWINPDKLSELEDLLPSRPEVPNIIGDTEEVELQEFDSTRGSGGGQRREAYNDSSDEESSSHHGPGVQCAHQ.

One can recognise a J domain in the interval 8-70 (KLYDILGVPP…EKRELYDRYG (63 aa)). The residue at position 39 (K39) is an N6-acetyllysine. Phosphoserine occurs at positions 78 and 123. The CR-type zinc finger occupies 130–214 (GKTTKLQLSK…CEGKKVIKEV (85 aa)). Residue K134 forms a Glycyl lysine isopeptide (Lys-Gly) (interchain with G-Cter in SUMO2) linkage. Positions 143 and 146 each coordinate Zn(2+). Residues 143–150 (CSACSGQG) form a CXXCXGXG motif repeat. K152 carries the post-translational modification N6-acetyllysine. Zn(2+) is bound by residues C159, C162, C186, C189, C202, and C205. CXXCXGXG motif repeat units lie at residues 159 to 166 (CSACRGRG), 186 to 193 (CSDCNGEG), and 202 to 209 (CKKCEGKK). Positions 359–412 (PEVPNIIGDTEEVELQEFDSTRGSGGGQRREAYNDSSDEESSSHHGPGVQCAHQ) are disordered. Residue Y391 is modified to Phosphotyrosine. Phosphoserine is present on residues S394 and S395. Cysteine methyl ester is present on C409. C409 is lipidated: S-farnesyl cysteine. A propeptide spans 410–412 (AHQ) (removed in mature form).

The protein localises to the membrane. Co-chaperone of Hsc70. Stimulates ATP hydrolysis and the folding of unfolded proteins mediated by HSPA1A/B (in vitro). The sequence is that of DnaJ homolog subfamily A member 2 (DNAJA2) from Bos taurus (Bovine).